A 414-amino-acid polypeptide reads, in one-letter code: Glutamyl-tRNA reductase (414 aa).

Substrate is bound by residues 49–52 (TCNR), S108, 113–115 (EPQ), and Q119. The active-site Nucleophile is the C50. 188-193 (GAGQTG) lines the NADP(+) pocket.

Belongs to the glutamyl-tRNA reductase family. As to quaternary structure, homodimer.

The catalysed reaction is (S)-4-amino-5-oxopentanoate + tRNA(Glu) + NADP(+) = L-glutamyl-tRNA(Glu) + NADPH + H(+). Its pathway is porphyrin-containing compound metabolism; protoporphyrin-IX biosynthesis; 5-aminolevulinate from L-glutamyl-tRNA(Glu): step 1/2. In terms of biological role, catalyzes the NADPH-dependent reduction of glutamyl-tRNA(Glu) to glutamate 1-semialdehyde (GSA). The sequence is that of Glutamyl-tRNA reductase from Francisella tularensis subsp. holarctica (strain FTNF002-00 / FTA).